Reading from the N-terminus, the 650-residue chain is Threonine--tRNA ligase (650 aa).

The region spanning 1–66 (MVQITLPDGS…EHDAQLAIVT (66 aa)) is the TGS domain. Positions 247 to 538 (DHRKIGRDLD…LIENHAGAMP (292 aa)) are catalytic. Residues cysteine 338, histidine 389, and histidine 515 each contribute to the Zn(2+) site.

Belongs to the class-II aminoacyl-tRNA synthetase family. In terms of assembly, homodimer. Zn(2+) serves as cofactor.

It is found in the cytoplasm. The catalysed reaction is tRNA(Thr) + L-threonine + ATP = L-threonyl-tRNA(Thr) + AMP + diphosphate + H(+). Its function is as follows. Catalyzes the attachment of threonine to tRNA(Thr) in a two-step reaction: L-threonine is first activated by ATP to form Thr-AMP and then transferred to the acceptor end of tRNA(Thr). Also edits incorrectly charged L-seryl-tRNA(Thr). This is Threonine--tRNA ligase from Bordetella petrii (strain ATCC BAA-461 / DSM 12804 / CCUG 43448).